A 235-amino-acid polypeptide reads, in one-letter code: Centromere protein H (235 aa).

The interval methionine 1–proline 23 is disordered. Residues glutamate 125 to arginine 145 are a coiled coil.

This sequence belongs to the CENP-H/MCM16 family. As to quaternary structure, component of the CENPA-HI complex, at least composed of CENPH, CENPI, CENPK, CENPL, CENPM, CENPO and CENPP. Interacts with NDC80.

The protein resides in the nucleus. It is found in the chromosome. It localises to the centromere. The protein localises to the kinetochore. Its function is as follows. Component of the CENPA-HI complex, a centromeric complex involved in assembly of kinetochore proteins, mitotic progression and chromosome segregation. Required for the localization of CENPC but not CENPA to the centromere. It however may be involved in incorporation of newly synthesized CENPA into centromeres via its interaction with the CENPA-NAC complex. In Gallus gallus (Chicken), this protein is Centromere protein H (CENPH).